Here is a 637-residue protein sequence, read N- to C-terminus: DNA mismatch repair protein MutL (637 aa).

Disordered regions lie at residues 352–384 and 405–430; these read DDFT…NVLF and ASVE…AMEQ.

Belongs to the DNA mismatch repair MutL/HexB family.

Its function is as follows. This protein is involved in the repair of mismatches in DNA. It is required for dam-dependent methyl-directed DNA mismatch repair. May act as a 'molecular matchmaker', a protein that promotes the formation of a stable complex between two or more DNA-binding proteins in an ATP-dependent manner without itself being part of a final effector complex. In Halalkalibacterium halodurans (strain ATCC BAA-125 / DSM 18197 / FERM 7344 / JCM 9153 / C-125) (Bacillus halodurans), this protein is DNA mismatch repair protein MutL.